We begin with the raw amino-acid sequence, 153 residues long: Endoribonuclease YbeY (153 aa).

Positions 114, 118, and 124 each coordinate Zn(2+).

The protein belongs to the endoribonuclease YbeY family. Zn(2+) serves as cofactor.

The protein resides in the cytoplasm. Single strand-specific metallo-endoribonuclease involved in late-stage 70S ribosome quality control and in maturation of the 3' terminus of the 16S rRNA. This is Endoribonuclease YbeY from Shewanella oneidensis (strain ATCC 700550 / JCM 31522 / CIP 106686 / LMG 19005 / NCIMB 14063 / MR-1).